Reading from the N-terminus, the 122-residue chain is Large ribosomal subunit protein uL14 (122 aa).

This sequence belongs to the universal ribosomal protein uL14 family. As to quaternary structure, part of the 50S ribosomal subunit. Forms a cluster with proteins L3 and L19. In the 70S ribosome, L14 and L19 interact and together make contacts with the 16S rRNA in bridges B5 and B8.

In terms of biological role, binds to 23S rRNA. Forms part of two intersubunit bridges in the 70S ribosome. The protein is Large ribosomal subunit protein uL14 of Acinetobacter baylyi (strain ATCC 33305 / BD413 / ADP1).